The primary structure comprises 338 residues: Methionine import ATP-binding protein MetN 1 (338 aa).

The 240-residue stretch at 2–241 (IQLENIEKHY…PNEKLTKDFI (240 aa)) folds into the ABC transporter domain. 38 to 45 (GYSGAGKS) contacts ATP.

The protein belongs to the ABC transporter superfamily. Methionine importer (TC 3.A.1.24) family. The complex is composed of two ATP-binding proteins (MetN), two transmembrane proteins (MetI) and a solute-binding protein (MetQ).

Its subcellular location is the cell membrane. It catalyses the reaction L-methionine(out) + ATP + H2O = L-methionine(in) + ADP + phosphate + H(+). The enzyme catalyses D-methionine(out) + ATP + H2O = D-methionine(in) + ADP + phosphate + H(+). In terms of biological role, part of the ABC transporter complex MetNIQ involved in methionine import. Responsible for energy coupling to the transport system. In Oceanobacillus iheyensis (strain DSM 14371 / CIP 107618 / JCM 11309 / KCTC 3954 / HTE831), this protein is Methionine import ATP-binding protein MetN 1.